Here is a 49-residue protein sequence, read N- to C-terminus: Large ribosomal subunit protein bL33A (49 aa).

Belongs to the bacterial ribosomal protein bL33 family.

This is Large ribosomal subunit protein bL33A from Geobacillus thermodenitrificans (strain NG80-2).